A 223-amino-acid polypeptide reads, in one-letter code: Alpha-enolase (223 aa).

Ser-8 provides a ligand contact to Mg(2+). Phosphotyrosine is present on Tyr-12. Residue Lys-25 is modified to N6-acetyllysine. Glu-39 serves as a coordination point for substrate. N6-acetyllysine is present on Lys-61. Residue Glu-69 is the Proton donor of the active site. N6-acetyllysine; alternate is present on Lys-87. At Lys-87 the chain carries N6-malonyllysine; alternate. The residue at position 87 (Lys-87) is an N6-succinyllysine; alternate. Mg(2+) contacts are provided by Asp-99 and Asp-119. Position 119 (Asp-119) interacts with substrate. N6-acetyllysine occurs at positions 133 and 141. Residue Lys-141 is the Proton acceptor of the active site. Residues 168 to 171 (SHRS) and Lys-192 each bind substrate. The tract at residues 202–223 (YNQILRIEEELGSKSFRNPLAK) is required for interaction with PLG. Lys-215 is modified (N6-acetyllysine; alternate). Position 215 is an N6-malonyllysine; alternate (Lys-215). Lys-215 carries the post-translational modification N6-succinyllysine; alternate.

Belongs to the enolase family. In terms of assembly, mammalian enolase is composed of 3 isozyme subunits, alpha, beta and gamma, which can form homodimers or heterodimers which are cell-type and development-specific. ENO1 interacts with PLG in the neuronal plasma membrane and promotes its activation. The C-terminal lysine is required for this binding. Interacts with ENO4 and PGAM2. Interacts with CMTM6. Requires Mg(2+) as cofactor. ISGylated. Post-translationally, lysine 2-hydroxyisobutyrylation (Khib) by p300/EP300 activates the phosphopyruvate hydratase activity.

It is found in the cytoplasm. The protein resides in the cell membrane. It catalyses the reaction (2R)-2-phosphoglycerate = phosphoenolpyruvate + H2O. It participates in carbohydrate degradation; glycolysis; pyruvate from D-glyceraldehyde 3-phosphate: step 4/5. Glycolytic enzyme the catalyzes the conversion of 2-phosphoglycerate to phosphoenolpyruvate. In addition to glycolysis, involved in various processes such as growth control, hypoxia tolerance and allergic responses. May also function in the intravascular and pericellular fibrinolytic system due to its ability to serve as a receptor and activator of plasminogen on the cell surface of several cell-types such as leukocytes and neurons. Stimulates immunoglobulin production. The polypeptide is Alpha-enolase (Mesocricetus auratus (Golden hamster)).